The primary structure comprises 1385 residues: Formin-like protein 7 (1385 aa).

The Phosphatase tensin-type domain occupies 9-193; it reads FKKPPDGLLL…RYVSMRNVVP (185 aa). Residue Cys126 is the Phosphocysteine intermediate of the active site. The 160-residue stretch at 199–358 folds into the C2 tensin-type domain; sequence DRALTLDSVI…KASSTSQGNI (160 aa). Disordered regions lie at residues 345 to 367, 427 to 510, 649 to 989, and 1362 to 1385; these read IPQR…DGSE, APSR…LTVN, STAA…PLHW, and KRAQ…LLEP. Composition is skewed to polar residues over residues 349–358, 448–470, and 483–510; these read KASSTSQGNI, TSAS…SPVQ, and PAQS…LTVN. Composition is skewed to pro residues over residues 654–665 and 689–701; these read PPLPPPLPPPLK and TQPP…PPIQ. Residues 702–718 are compositionally biased toward low complexity; it reads PTLISNSIYSSTSSVVS. Composition is skewed to pro residues over residues 727–758, 766–795, and 802–815; these read PAPP…PPSA, PVPP…PPAA, and AVPP…PPMV. Positions 855–867 are enriched in low complexity; it reads QTSSLVSSLPSSR. Composition is skewed to pro residues over residues 895–906 and 921–932; these read SAPPAPPLPPPK and WPPPPPPGPPPK. Low complexity predominate over residues 933 to 942; sequence NSSNSLPSKG. The 399-residue stretch at 974–1372 folds into the FH2 domain; the sequence is RPNQSSKRTP…RAQMEAEKEK (399 aa).

It belongs to the formin-like family. Class-II subfamily.

This is Formin-like protein 7 (FH7) from Oryza sativa subsp. japonica (Rice).